An 88-amino-acid chain; its full sequence is Alpha-conotoxin GVIIIB (88 aa).

A signal peptide spans 1–20 (MMSKMGAMFVLLLLFTLASS). Positions 21 to 43 (QQEGDVQARKTRPKSDFYRALPR) are excised as a propeptide. A Threonine amide modification is found at Thr-87.

It belongs to the conotoxin S superfamily. Post-translationally, contains 5 disulfide bonds. In terms of processing, the predominant peptide contains 2 hydroxyprolines, while 2 minor peptides contains 1 and 3 hydroxyprolines. Expressed by the venom duct.

It localises to the secreted. In terms of biological role, alpha-conotoxins act on postsynaptic membranes, they bind to the nicotinic acetylcholine receptors (nAChR) and thus inhibit them. This toxin shows high activity on alpha-9-alpha-10 (CHRNA9-CHRNA10) (IC(50)=9.79 nM). It also shows weak activity on alpha-3-beta-2 (CHRNA3-CHRNB2) (IC(50)~1 uM), alpha-6/alpha-3-beta-2-beta-3 (CHRNA6/CHRNA3-CHRNB2-CHRNB3) (IC(50)~1 uM). The toxin binds to the same or overlapping binding sites than conotoxin RgIA (AC P0C1D0). The sequence is that of Alpha-conotoxin GVIIIB from Conus geographus (Geography cone).